A 263-amino-acid chain; its full sequence is ABC transporter I family member 17 (263 aa).

An ABC transporter domain is found at 29–260; the sequence is IRVHDLTRVA…THPMAQRFLQ (232 aa). 62–69 is an ATP binding site; that stretch reads GPSGSGKS.

Belongs to the ABC transporter superfamily. ABCI family.

The sequence is that of ABC transporter I family member 17 (ABCI17) from Arabidopsis thaliana (Mouse-ear cress).